A 1073-amino-acid polypeptide reads, in one-letter code: Serine/threonine-protein kinase 11-interacting protein (1073 aa).

LRR repeat units follow at residues 166-187 (ELQT…LQLL), 189-210 (ALRV…LTTL), 212-233 (ELEY…GIFS), 236-257 (KLLT…EQLV), 258-279 (NLQH…APLS), and 283-304 (YLKK…RSAT). Disordered stretches follow at residues 389 to 409 (VKVR…SQAL), 455 to 533 (SRSA…EKPE), 724 to 817 (EVSS…QGMK), and 834 to 859 (MGSY…SEET). The span at 515–532 (REEEADELMLGEEEDEKP) shows a compositional bias: acidic residues. 2 stretches are compositionally biased toward polar residues: residues 779–788 (MDTSNSTRTP) and 843–859 (RGPT…SEET).

Belongs to the STK11IP family.

The protein localises to the cytoplasm. This chain is Serine/threonine-protein kinase 11-interacting protein (STK11IP), found in Gallus gallus (Chicken).